A 253-amino-acid chain; its full sequence is Nurim homolog (253 aa).

Residues 1 to 2 (MA) are Nuclear-facing. Residues 3 to 30 (TFAKVMLLLSSVATFGYTFFVVGKLMLF) form a helical membrane-spanning segment. Residues 31–56 (LSTPRSISKAHTWIFNLLDNKSRLET) are Perinuclear space-facing. The chain crosses the membrane as a helical span at residues 57–78 (AYGPIVFDTLYLIGFIFQHSFL). At 79–96 (KSALVKNLWRKLGLAAAE) the chain is on the nuclear side. Residues 97–113 (RTIYSLTSSICLHYLLK) form a helical membrane-spanning segment. Over 114 to 132 (NWLPAQSIVLWQVDVDESA) the chain is Perinuclear space. A helical transmembrane segment spans residues 133-161 (PLWWTFVVTHGLGWAVIFGGSLIMDLPEL). The Nuclear portion of the chain corresponds to 162–188 (LGVKQVYYDLKEYGEPVAYKSSELRNL). The chain crosses the membrane as a helical span at residues 189-207 (YSHVRHPSFVGLSVILFAT). Topologically, residues 208–213 (NVMSLD) are perinuclear space. The helical transmembrane segment at 214–231 (RLLLASLLTVYMYVAWST) threads the bilayer. The Nuclear segment spans residues 232–253 (DDKDVAYQKQQLRNKKHELKAQ).

Belongs to the nurim family.

Its subcellular location is the nucleus inner membrane. The sequence is that of Nurim homolog (nrm) from Drosophila pseudoobscura pseudoobscura (Fruit fly).